A 355-amino-acid chain; its full sequence is DNA polymerase IV (355 aa).

In terms of domain architecture, UmuC spans 7–188; that stretch reads IIHIDMDCFY…LPVRKLFGVG (182 aa). Residues D11 and D106 each coordinate Mg(2+). Residue E107 is part of the active site.

The protein belongs to the DNA polymerase type-Y family. In terms of assembly, monomer. Requires Mg(2+) as cofactor.

The protein resides in the cytoplasm. The enzyme catalyses DNA(n) + a 2'-deoxyribonucleoside 5'-triphosphate = DNA(n+1) + diphosphate. In terms of biological role, poorly processive, error-prone DNA polymerase involved in untargeted mutagenesis. Copies undamaged DNA at stalled replication forks, which arise in vivo from mismatched or misaligned primer ends. These misaligned primers can be extended by PolIV. Exhibits no 3'-5' exonuclease (proofreading) activity. May be involved in translesional synthesis, in conjunction with the beta clamp from PolIII. This chain is DNA polymerase IV, found in Legionella pneumophila (strain Lens).